The chain runs to 394 residues: Phosphopentomutase (394 aa).

The Mn(2+) site is built by aspartate 13, aspartate 286, histidine 291, aspartate 327, histidine 328, and histidine 339.

It belongs to the phosphopentomutase family. Requires Mn(2+) as cofactor.

It is found in the cytoplasm. The enzyme catalyses 2-deoxy-alpha-D-ribose 1-phosphate = 2-deoxy-D-ribose 5-phosphate. It catalyses the reaction alpha-D-ribose 1-phosphate = D-ribose 5-phosphate. It functions in the pathway carbohydrate degradation; 2-deoxy-D-ribose 1-phosphate degradation; D-glyceraldehyde 3-phosphate and acetaldehyde from 2-deoxy-alpha-D-ribose 1-phosphate: step 1/2. Its function is as follows. Isomerase that catalyzes the conversion of deoxy-ribose 1-phosphate (dRib-1-P) and ribose 1-phosphate (Rib-1-P) to deoxy-ribose 5-phosphate (dRib-5-P) and ribose 5-phosphate (Rib-5-P), respectively. This chain is Phosphopentomutase, found in Bacillus thuringiensis (strain Al Hakam).